The primary structure comprises 289 residues: ATP synthase gamma chain (289 aa).

Belongs to the ATPase gamma chain family. As to quaternary structure, F-type ATPases have 2 components, CF(1) - the catalytic core - and CF(0) - the membrane proton channel. CF(1) has five subunits: alpha(3), beta(3), gamma(1), delta(1), epsilon(1). CF(0) has three main subunits: a, b and c.

It is found in the cell inner membrane. Produces ATP from ADP in the presence of a proton gradient across the membrane. The gamma chain is believed to be important in regulating ATPase activity and the flow of protons through the CF(0) complex. The polypeptide is ATP synthase gamma chain (Herminiimonas arsenicoxydans).